The sequence spans 487 residues: Malonate-semialdehyde dehydrogenase (487 aa).

7 residues coordinate NAD(+): Ala150, Phe152, Lys176, Glu179, Arg180, Ser229, and Thr251. The active-site Nucleophile is Cys284. Residue Glu382 coordinates NAD(+).

The protein belongs to the aldehyde dehydrogenase family. IolA subfamily. In terms of assembly, homotetramer.

It carries out the reaction 3-oxopropanoate + NAD(+) + CoA + H2O = hydrogencarbonate + acetyl-CoA + NADH + H(+). It catalyses the reaction 2-methyl-3-oxopropanoate + NAD(+) + CoA + H2O = propanoyl-CoA + hydrogencarbonate + NADH + H(+). It functions in the pathway polyol metabolism; myo-inositol degradation into acetyl-CoA; acetyl-CoA from myo-inositol: step 7/7. Its function is as follows. Catalyzes the oxidation of malonate semialdehyde (MSA) and methylmalonate semialdehyde (MMSA) into acetyl-CoA and propanoyl-CoA, respectively. Is involved in a myo-inositol catabolic pathway. Bicarbonate, and not CO2, is the end-product of the enzymatic reaction. The polypeptide is Malonate-semialdehyde dehydrogenase (Bacillus subtilis subsp. natto).